Reading from the N-terminus, the 226-residue chain is Cytidylate kinase (226 aa).

ATP is bound at residue 10 to 18 (GPASSGKST).

This sequence belongs to the cytidylate kinase family. Type 1 subfamily.

The protein localises to the cytoplasm. It catalyses the reaction CMP + ATP = CDP + ADP. The enzyme catalyses dCMP + ATP = dCDP + ADP. The protein is Cytidylate kinase of Streptococcus pyogenes serotype M5 (strain Manfredo).